Reading from the N-terminus, the 726-residue chain is Catalase-peroxidase (726 aa).

Residues 1–33 form a disordered region; the sequence is MSTSDDIHNTTATGKCPFHQGGHDQSAGAGTTT. A cross-link (tryptophyl-tyrosyl-methioninium (Trp-Tyr) (with M-252)) is located at residues 105–226; it reads WHGAGTYRSI…LGATEMGLIY (122 aa). H106 serves as the catalytic Proton acceptor. A cross-link (tryptophyl-tyrosyl-methioninium (Tyr-Met) (with W-105)) is located at residues 226-252; it reads YVNPEGPDHSGEPLSAAAAIRATFGNM. H267 contributes to the heme b binding site.

The protein belongs to the peroxidase family. Peroxidase/catalase subfamily. In terms of assembly, homodimer or homotetramer. Requires heme b as cofactor. In terms of processing, formation of the three residue Trp-Tyr-Met cross-link is important for the catalase, but not the peroxidase activity of the enzyme.

It catalyses the reaction H2O2 + AH2 = A + 2 H2O. The enzyme catalyses 2 H2O2 = O2 + 2 H2O. In terms of biological role, bifunctional enzyme with both catalase and broad-spectrum peroxidase activity. This chain is Catalase-peroxidase, found in Shigella flexneri.